A 364-amino-acid chain; its full sequence is Probable methyltransferase ICS2 (364 aa).

6 residues coordinate S-adenosyl-L-homocysteine: Tyr-18, Cys-61, Asp-98, Leu-99, Ser-133, and Phe-134. Asn-172, Asp-258, Phe-260, and Asn-261 together coordinate Mg(2+).

The protein belongs to the methyltransferase superfamily. Type-7 methyltransferase family. It depends on Mg(2+) as a cofactor.

Its function is as follows. No detectable N-methyltransferase activity. The sequence is that of Probable methyltransferase ICS2 from Camellia irrawadiensis (Burmese tea).